A 190-amino-acid polypeptide reads, in one-letter code: DNA-binding transcriptional repressor TetR (190 aa).

Residues 6 to 66 enclose the HTH tetR-type domain; the sequence is ETRSAALLAV…AALDAHDASF (61 aa). The segment at residues 29–48 is a DNA-binding region (H-T-H motif); sequence SMDSVAALAHASKTTIYRRW.

In terms of assembly, homodimer.

Functionally, binds to its own palindromic promoter and represses transcription of its operon; addition of tetracycline or doxycycline (but not tigecycline) interferes with DNA binding. Addition of TetX to the DNA-TetR-antibiotic complex restores DNA binding. This Mycobacteroides abscessus (strain ATCC 19977 / DSM 44196 / CCUG 20993 / CIP 104536 / JCM 13569 / NCTC 13031 / TMC 1543 / L948) (Mycobacterium abscessus) protein is DNA-binding transcriptional repressor TetR.